Reading from the N-terminus, the 240-residue chain is Ribonuclease PH (240 aa).

Phosphate is bound by residues R87 and 125 to 127 (GTR).

It belongs to the RNase PH family. As to quaternary structure, homohexameric ring arranged as a trimer of dimers.

It catalyses the reaction tRNA(n+1) + phosphate = tRNA(n) + a ribonucleoside 5'-diphosphate. Functionally, phosphorolytic 3'-5' exoribonuclease that plays an important role in tRNA 3'-end maturation. Removes nucleotide residues following the 3'-CCA terminus of tRNAs; can also add nucleotides to the ends of RNA molecules by using nucleoside diphosphates as substrates, but this may not be physiologically important. Probably plays a role in initiation of 16S rRNA degradation (leading to ribosome degradation) during starvation. This is Ribonuclease PH from Pseudomonas putida (strain ATCC 47054 / DSM 6125 / CFBP 8728 / NCIMB 11950 / KT2440).